The sequence spans 1730 residues: Myosin-7 (1730 aa).

The region spanning 8–56 (TVGSHVWVEDPDDAWIDGEVEEVNSEEITVNCSGKTVVAKLNNVYPKDP) is the Myosin N-terminal SH3-like domain. Positions 61–731 (LGVDDMTKLA…QMAEMDAHRA (671 aa)) constitute a Myosin motor domain. ATP is bound by residues 155–162 (GESGAGKT) and 208–216 (NNNSSRFGK). Actin-binding stretches follow at residues 494-528 (LIEK…YQTF), 530-553 (NHKR…AGDV), 588-612 (FPPL…KQQL), and 612-634 (LQSL…KPNN). 4 IQ domains span residues 757–786 (LQAA…EAAS), 782–811 (REAA…SACS), 831–850 (RRAT…HQRY), and 853–882 (TKKA…AAKE). A coiled-coil region spans residues 883–1224 (TGALQDAKTK…VSDMETAEQI (342 aa)). The 352-residue stretch at 1327-1678 (DRIVPVFGSA…ISNLKLLLTN (352 aa)) folds into the Dilute domain. Disordered regions lie at residues 1367–1387 (QSST…FGRM) and 1456–1520 (DSSV…SSEE). A compositionally biased stretch (low complexity) spans 1456–1465 (DSSVVNSPSK). The segment covering 1475–1508 (SSEENSPKKSSEENSPKESSGDKSPQKLSDDNSP) has biased composition (basic and acidic residues).

This sequence belongs to the TRAFAC class myosin-kinesin ATPase superfamily. Myosin family. Plant myosin class XI subfamily. As to quaternary structure, homodimer.

Functionally, myosin heavy chain that is required for the cell cycle-regulated transport of various organelles and proteins for their segregation. Functions by binding with its tail domain to receptor proteins on organelles and exerting force with its N-terminal motor domain against actin filaments, thereby transporting its cargo along polarized actin cables. This chain is Myosin-7 (XI-A), found in Arabidopsis thaliana (Mouse-ear cress).